The chain runs to 313 residues: Olfactory receptor 2B6 (313 aa).

Residues 1–25 (MNWVNDSIIQEFILLGFSDRPWLEF) lie on the Extracellular side of the membrane. Asn5 carries an N-linked (GlcNAc...) asparagine glycan. Residues 26–49 (PLLVVFLISYTVTIFGNLTIILVS) traverse the membrane as a helical segment. At 50–57 (RLDTKLHT) the chain is on the cytoplasmic side. Residues 58-79 (PMYFFLTNLSLLDLCYTTCTVP) form a helical membrane-spanning segment. The Extracellular portion of the chain corresponds to 80–100 (QMLVNLCSIRKVISYRGCVAQ). A disulfide bridge links Cys97 with Cys189. A helical membrane pass occupies residues 101 to 120 (LFIFLALGATEYLLLAVMSF). At 121–139 (DRFVAICRPLHYSVIMHQR) the chain is on the cytoplasmic side. Residues 140–158 (LCLQLAAASWVTGFSNSVW) traverse the membrane as a helical segment. Residues 159 to 195 (LSTLTLQLPLCDPYVIDHFLCEVPALLKLSCVETTAN) lie on the Extracellular side of the membrane. Residues 196–219 (EAELFLVSELFHLIPLTLILISYA) form a helical membrane-spanning segment. The Cytoplasmic portion of the chain corresponds to 220-236 (FIVRAVLRIQSAEGRQK). A helical membrane pass occupies residues 237–259 (AFGTCGSHLIVVSLFYSTAVSVY). The Extracellular portion of the chain corresponds to 260–272 (LQPPSPSSKDQGK). Residues 273-292 (MVSLFYGIIAPMLNPLIYTL) traverse the membrane as a helical segment. Topologically, residues 293-313 (RNKEVKEGFKRLVARVFLIKK) are cytoplasmic.

The protein belongs to the G-protein coupled receptor 1 family.

Its subcellular location is the cell membrane. Odorant receptor. The chain is Olfactory receptor 2B6 from Homo sapiens (Human).